The chain runs to 279 residues: Syntaxin-21 (279 aa).

Residues 1-34 (MSFQDLEAGTRSPAPNRFTGGRQQRPSSRGDPSQ) form a disordered region. The residue at position 2 (serine 2) is an N-acetylserine. Residues 2-258 (SFQDLEAGTR…AKTQRSNSSL (257 aa)) are Cytoplasmic-facing. Positions 21–31 (GRQQRPSSRGD) are enriched in polar residues. Positions 65–94 (ELRDKLQKTRLQISELVKNTSAKLKEASEA) form a coiled coil. Positions 186–248 (EAIIEEREQG…TQATVQLRKA (63 aa)) constitute a t-SNARE coiled-coil homology domain. Residues 259–279 (TCLLILIFGIVLLIVIIVVLV) traverse the membrane as a helical; Anchor for type IV membrane protein segment.

This sequence belongs to the syntaxin family. Interacts with VTI11 and SYP51 to form a t-SNARE complex and with alpha-SNAP to form a 20S complex. A high level expression is seen in the roots while a low level expression is seen in the leaves.

The protein localises to the prevacuolar compartment membrane. Its function is as follows. May function in the docking or fusion of transport vesicles with the prevacuolar membrane. The polypeptide is Syntaxin-21 (SYP21) (Arabidopsis thaliana (Mouse-ear cress)).